Reading from the N-terminus, the 317-residue chain is Tenomodulin (317 aa).

The Cytoplasmic segment spans residues 1 to 30; sequence MAKNPPENCEGCHILNAEALKSKKICKSLK. The chain crosses the membrane as a helical; Signal-anchor for type II membrane protein span at residues 31 to 50; that stretch reads ICGLVFGILALTLIVLFWGS. Over 51 to 317 the chain is Extracellular; that stretch reads KHFWPEVSKK…WWVARMLGRV (267 aa). Residues 93-186 form the BRICHOS domain; the sequence is GNGTDETLEV…ICDNVTMYWI (94 aa). N-linked (GlcNAc...) asparagine glycosylation is present at N94. A disulfide bridge connects residues C120 and C178. N180 is a glycosylation site (N-linked (GlcNAc...) asparagine). Position 239 is a phosphoserine (S239).

Belongs to the chondromodulin-1 family. Widely expressed with highest expression in tendons and ligaments, in the diaphragm, eye and skeletal muscle. Expressed in neuronal cells of all brain regions. Very low expression, if any, in glial cells.

Its subcellular location is the membrane. It localises to the nucleus envelope. In terms of biological role, may be an angiogenesis inhibitor. This is Tenomodulin (Tnmd) from Mus musculus (Mouse).